The chain runs to 255 residues: NAD kinase (255 aa).

D44 functions as the Proton acceptor in the catalytic mechanism. NAD(+) is bound by residues 44–45 (DG), H49, 114–115 (NE), D144, A152, 155–160 (SAYNLS), and Q216.

The protein belongs to the NAD kinase family. A divalent metal cation serves as cofactor.

The protein localises to the cytoplasm. The catalysed reaction is NAD(+) + ATP = ADP + NADP(+) + H(+). Involved in the regulation of the intracellular balance of NAD and NADP, and is a key enzyme in the biosynthesis of NADP. Catalyzes specifically the phosphorylation on 2'-hydroxyl of the adenosine moiety of NAD to yield NADP. This Rickettsia canadensis (strain McKiel) protein is NAD kinase.